We begin with the raw amino-acid sequence, 423 residues long: Imidazolonepropionase (423 aa).

Fe(3+)-binding residues include H87 and H89. The Zn(2+) site is built by H87 and H89. Residues R96, Y159, and H192 each coordinate 4-imidazolone-5-propanoate. Y159 contributes to the N-formimidoyl-L-glutamate binding site. H257 serves as a coordination point for Fe(3+). H257 is a Zn(2+) binding site. Position 260 (E260) interacts with 4-imidazolone-5-propanoate. D331 provides a ligand contact to Fe(3+). Position 331 (D331) interacts with Zn(2+). Positions 333 and 335 each coordinate N-formimidoyl-L-glutamate. S336 contributes to the 4-imidazolone-5-propanoate binding site.

This sequence belongs to the metallo-dependent hydrolases superfamily. HutI family. The cofactor is Zn(2+). It depends on Fe(3+) as a cofactor.

It localises to the cytoplasm. It catalyses the reaction 4-imidazolone-5-propanoate + H2O = N-formimidoyl-L-glutamate. It participates in amino-acid degradation; L-histidine degradation into L-glutamate; N-formimidoyl-L-glutamate from L-histidine: step 3/3. In terms of biological role, catalyzes the hydrolytic cleavage of the carbon-nitrogen bond in imidazolone-5-propanoate to yield N-formimidoyl-L-glutamate. It is the third step in the universal histidine degradation pathway. The polypeptide is Imidazolonepropionase (Porphyromonas gingivalis (strain ATCC 33277 / DSM 20709 / CIP 103683 / JCM 12257 / NCTC 11834 / 2561)).